A 57-amino-acid chain; its full sequence is MHIIGPVSFSRTVFLDFYNYLLQSGLYETLRIDRKYIEYTLKNKYATLRLYGKYVHT.

This is an uncharacterized protein from Thermoproteus tenax virus 1 (strain KRA1) (TTV1).